An 83-amino-acid polypeptide reads, in one-letter code: Turripeptide Lol11.1 (83 aa).

The signal sequence occupies residues 1-27; sequence MARQMMTVGCLILIVVLLDMMVPVFNT.

This sequence belongs to the conopeptide I2-like superfamily. In terms of processing, contains 4 disulfide bonds. Expressed by the venom duct.

The protein localises to the secreted. Functionally, acts as a neurotoxin by inhibiting voltage-gated potassium channels (Kv). This Iotyrris olangoensis (Sea snail) protein is Turripeptide Lol11.1.